Consider the following 323-residue polypeptide: ATP synthase gamma chain (323 aa).

It belongs to the ATPase gamma chain family. F-type ATPases have 2 components, CF(1) - the catalytic core - and CF(0) - the membrane proton channel. CF(1) has five subunits: alpha(3), beta(3), gamma(1), delta(1), epsilon(1). CF(0) has three main subunits: a, b and c.

Its subcellular location is the cell membrane. Its function is as follows. Produces ATP from ADP in the presence of a proton gradient across the membrane. The gamma chain is believed to be important in regulating ATPase activity and the flow of protons through the CF(0) complex. The chain is ATP synthase gamma chain from Nocardia farcinica (strain IFM 10152).